The primary structure comprises 311 residues: Pyrimidine-specific ribonucleoside hydrolase RihA (311 aa).

His-240 is an active-site residue.

This sequence belongs to the IUNH family. RihA subfamily.

Functionally, hydrolyzes cytidine or uridine to ribose and cytosine or uracil, respectively. In Salmonella arizonae (strain ATCC BAA-731 / CDC346-86 / RSK2980), this protein is Pyrimidine-specific ribonucleoside hydrolase RihA.